The chain runs to 91 residues: MSDRLDDDTISDRLPDDWIHDGDAITRTYTFEEYLDGVAFASEVGDLADEAFHHPEITIRYDEVEVRFTDHEAGGVTSQDIELARRTDDRR.

This sequence belongs to the pterin-4-alpha-carbinolamine dehydratase family.

The enzyme catalyses (4aS,6R)-4a-hydroxy-L-erythro-5,6,7,8-tetrahydrobiopterin = (6R)-L-erythro-6,7-dihydrobiopterin + H2O. In Halobacterium salinarum (strain ATCC 29341 / DSM 671 / R1), this protein is Putative pterin-4-alpha-carbinolamine dehydratase.